A 300-amino-acid chain; its full sequence is L-arabinolactonase (300 aa).

Residues Glu22, Asn156, and Asp205 each contribute to the a divalent metal cation site.

Belongs to the SMP-30/CGR1 family. Requires a divalent metal cation as cofactor.

The enzyme catalyses L-arabinono-1,4-lactone + H2O = L-arabinonate + H(+). Its function is as follows. Catalyzes the cleavage of L-arabino-gamma-lactone to L-arabonate. Is involved in a degradation pathway of L-arabinose that allows A.brasilense to grow on L-arabinose as a sole carbon source. Can also use D-galactono-1,4-lactone as substrate in vitro; however, the enzyme is probably not involved in the metabolism of D-galactose in vivo. This Azospirillum brasilense protein is L-arabinolactonase (araB).